The primary structure comprises 864 residues: Leucine--tRNA ligase (864 aa).

Positions 42 to 52 (PYPSGKLHMGH) match the 'HIGH' region motif. A 'KMSKS' region motif is present at residues 624-628 (KMSKS). Residue Lys-627 coordinates ATP.

Belongs to the class-I aminoacyl-tRNA synthetase family.

The protein resides in the cytoplasm. The catalysed reaction is tRNA(Leu) + L-leucine + ATP = L-leucyl-tRNA(Leu) + AMP + diphosphate. The polypeptide is Leucine--tRNA ligase (Burkholderia mallei (strain NCTC 10229)).